The primary structure comprises 235 residues: MNSTRLVYELCDIVNLYLCQPGVQIDVDRCASGPHVFTKGGTEAICTVKLSHGLVYNIEFVYKFWAHKLESVKYPFSPCFIISNNGLATTLKCFLSRPRNVNHFGHVLNIDSDVYLTKNTSVILSQDDFVKFKTNLVFSKDLDVFHSMVVFRTYLIEHRQALQFLVVKPRSSKRVNSILSSVAKTASQNFILDPPRRSEETRVCIKPWTLSKKNIWTIILSLVAVVAIILKWREL.

Residues 1–214 (MNSTRLVYEL…IKPWTLSKKN (214 aa)) lie on the Perinuclear space side of the membrane. Residues 215–232 (IWTIILSLVAVVAIILKW) traverse the membrane as a helical segment. Over 233–235 (REL) the chain is Nuclear.

The protein belongs to the herpesviridae NEC2 protein family. In terms of assembly, forms a heterohexameric complex with NEC1. Post-translationally, phosphorylated.

Its subcellular location is the host nucleus inner membrane. Functionally, plays an essential role in virion nuclear egress, the first step of virion release from infected cell. Within the host nucleus, NEC1 interacts with the newly formed capsid through the vertexes and directs it to the inner nuclear membrane by associating with NEC2. Induces the budding of the capsid at the inner nuclear membrane as well as its envelopment into the perinuclear space. There, the NEC1/NEC2 complex promotes the fusion of the enveloped capsid with the outer nuclear membrane and the subsequent release of the viral capsid into the cytoplasm where it will reach the secondary budding sites in the host Golgi or trans-Golgi network. This is Nuclear egress protein 2 from Saimiri sciureus (Common squirrel monkey).